Here is a 316-residue protein sequence, read N- to C-terminus: Small ribosomal subunit protein mS26 (316 aa).

Positions 41-71 (TTRSARDSVSIPPDSPNYIKVPEPPQSSEVR) are disordered.

This sequence belongs to the mitochondrion-specific ribosomal protein mS26 family. Component of the mitochondrial small ribosomal subunit (mt-SSU). Mature N.crassa 74S mitochondrial ribosomes consist of a small (37S) and a large (54S) subunit. The 37S small subunit contains a 16S ribosomal RNA (16S mt-rRNA) and 32 different proteins. The 54S large subunit contains a 23S rRNA (23S mt-rRNA) and 42 different proteins.

It localises to the mitochondrion. In terms of biological role, component of the mitochondrial ribosome (mitoribosome), a dedicated translation machinery responsible for the synthesis of mitochondrial genome-encoded proteins, including at least some of the essential transmembrane subunits of the mitochondrial respiratory chain. The mitoribosomes are attached to the mitochondrial inner membrane and translation products are cotranslationally integrated into the membrane. This chain is Small ribosomal subunit protein mS26 (pet123), found in Neurospora crassa (strain ATCC 24698 / 74-OR23-1A / CBS 708.71 / DSM 1257 / FGSC 987).